The sequence spans 392 residues: 4-hydroxy-3-methylbut-2-en-1-yl diphosphate synthase (flavodoxin) (392 aa).

[4Fe-4S] cluster is bound by residues Cys-280, Cys-283, Cys-315, and Glu-322. Over residues 371–380 (TEKGSDHCSE) the composition is skewed to basic and acidic residues. The tract at residues 371–392 (TEKGSDHCSETTRSGSPVVTVN) is disordered. Residues 381 to 392 (TTRSGSPVVTVN) show a composition bias toward polar residues.

It belongs to the IspG family. It depends on [4Fe-4S] cluster as a cofactor.

The catalysed reaction is (2E)-4-hydroxy-3-methylbut-2-enyl diphosphate + oxidized [flavodoxin] + H2O + 2 H(+) = 2-C-methyl-D-erythritol 2,4-cyclic diphosphate + reduced [flavodoxin]. Its pathway is isoprenoid biosynthesis; isopentenyl diphosphate biosynthesis via DXP pathway; isopentenyl diphosphate from 1-deoxy-D-xylulose 5-phosphate: step 5/6. Converts 2C-methyl-D-erythritol 2,4-cyclodiphosphate (ME-2,4cPP) into 1-hydroxy-2-methyl-2-(E)-butenyl 4-diphosphate. This chain is 4-hydroxy-3-methylbut-2-en-1-yl diphosphate synthase (flavodoxin), found in Mycobacterium leprae (strain Br4923).